We begin with the raw amino-acid sequence, 211 residues long: Pyridoxine/pyridoxamine 5'-phosphate oxidase (211 aa).

Substrate is bound by residues Arg-8–Tyr-11 and Lys-66. FMN-binding positions include Arg-61–Lys-66, Phe-76–Thr-77, Arg-82, Lys-83, and Gln-105. Residues Tyr-123, Arg-127, and Ser-131 each contribute to the substrate site. FMN-binding positions include Gln-140 to Ser-141 and Trp-184. Arg-190 to His-192 contacts substrate. Residue Arg-194 participates in FMN binding.

It belongs to the pyridoxamine 5'-phosphate oxidase family. In terms of assembly, homodimer. FMN serves as cofactor.

It carries out the reaction pyridoxamine 5'-phosphate + O2 + H2O = pyridoxal 5'-phosphate + H2O2 + NH4(+). It catalyses the reaction pyridoxine 5'-phosphate + O2 = pyridoxal 5'-phosphate + H2O2. The protein operates within cofactor metabolism; pyridoxal 5'-phosphate salvage; pyridoxal 5'-phosphate from pyridoxamine 5'-phosphate: step 1/1. It functions in the pathway cofactor metabolism; pyridoxal 5'-phosphate salvage; pyridoxal 5'-phosphate from pyridoxine 5'-phosphate: step 1/1. Functionally, catalyzes the oxidation of either pyridoxine 5'-phosphate (PNP) or pyridoxamine 5'-phosphate (PMP) into pyridoxal 5'-phosphate (PLP). The polypeptide is Pyridoxine/pyridoxamine 5'-phosphate oxidase (Thermosynechococcus vestitus (strain NIES-2133 / IAM M-273 / BP-1)).